The primary structure comprises 109 residues: Nucleoid-associated protein A1S_1684 (109 aa).

Belongs to the YbaB/EbfC family. Homodimer.

It is found in the cytoplasm. It localises to the nucleoid. Functionally, binds to DNA and alters its conformation. May be involved in regulation of gene expression, nucleoid organization and DNA protection. This is Nucleoid-associated protein A1S_1684 from Acinetobacter baumannii (strain ATCC 17978 / DSM 105126 / CIP 53.77 / LMG 1025 / NCDC KC755 / 5377).